We begin with the raw amino-acid sequence, 96 residues long: NADH-ubiquinone oxidoreductase chain 4L (96 aa).

Helical transmembrane passes span 2–22, 28–48, and 62–82; these read IMILYWSLPMILFILGLFCFV, LLSMLLSLEFIVLMLFFMLFI, and MFLTFSVCEGALGLSILVSMI.

It belongs to the complex I subunit 4L family.

It localises to the mitochondrion membrane. It carries out the reaction a ubiquinone + NADH + 5 H(+)(in) = a ubiquinol + NAD(+) + 4 H(+)(out). In terms of biological role, core subunit of the mitochondrial membrane respiratory chain NADH dehydrogenase (Complex I) that is believed to belong to the minimal assembly required for catalysis. Complex I functions in the transfer of electrons from NADH to the respiratory chain. The immediate electron acceptor for the enzyme is believed to be ubiquinone. The polypeptide is NADH-ubiquinone oxidoreductase chain 4L (mt:ND4L) (Drosophila melanogaster (Fruit fly)).